A 266-amino-acid chain; its full sequence is Aliphatic sulfonates import ATP-binding protein SsuB (266 aa).

Positions 23–244 (LALDAITKHY…RRGSAKLAEL (222 aa)) constitute an ABC transporter domain. Residue 55–62 (GRSGCGKS) participates in ATP binding.

It belongs to the ABC transporter superfamily. Aliphatic sulfonates importer (TC 3.A.1.17.2) family. The complex is composed of two ATP-binding proteins (SsuB), two transmembrane proteins (SsuC) and a solute-binding protein (SsuA).

It is found in the cell inner membrane. It carries out the reaction ATP + H2O + aliphatic sulfonate-[sulfonate-binding protein]Side 1 = ADP + phosphate + aliphatic sulfonateSide 2 + [sulfonate-binding protein]Side 1.. In terms of biological role, part of the ABC transporter complex SsuABC involved in aliphatic sulfonates import. Responsible for energy coupling to the transport system. In Pectobacterium atrosepticum (strain SCRI 1043 / ATCC BAA-672) (Erwinia carotovora subsp. atroseptica), this protein is Aliphatic sulfonates import ATP-binding protein SsuB.